Reading from the N-terminus, the 213-residue chain is Uridine kinase (213 aa).

12-19 (GGSCSGKT) lines the ATP pocket.

The protein belongs to the uridine kinase family.

Its subcellular location is the cytoplasm. The catalysed reaction is uridine + ATP = UMP + ADP + H(+). It carries out the reaction cytidine + ATP = CMP + ADP + H(+). The protein operates within pyrimidine metabolism; CTP biosynthesis via salvage pathway; CTP from cytidine: step 1/3. It participates in pyrimidine metabolism; UMP biosynthesis via salvage pathway; UMP from uridine: step 1/1. This is Uridine kinase (udk) from Mycoplasma genitalium (strain ATCC 33530 / DSM 19775 / NCTC 10195 / G37) (Mycoplasmoides genitalium).